Here is a 276-residue protein sequence, read N- to C-terminus: MSIQNAARRKTAPEIFARKSGEPIVMLTSYHAHTAALVDKYCDIILVGDSLGNVMHGFETTVPVTLEMMILQGHAVMRGSKQALVVVDMPFGSYEASKEQAFHSAARVLKETGCGAIKVEGGQRMAETIAFLVNRGVPVMGHVGLTPQSINTLGSFRARGRDEADSAMILEDAKAVSEAGAFSIVVEAVAEPLGRKITEAVAAPTIGIGASVACDGQVLVLEDMLGLSPWAPKFVKRYGDLGPGIEKAIQDYADEVRSRAFPGPEHVYNLKPKAAK.

Mg(2+) is bound by residues Asp-49 and Asp-88. Residues 49–50, Asp-88, and Lys-118 each bind 3-methyl-2-oxobutanoate; that span reads DS. Glu-120 contacts Mg(2+). Glu-187 acts as the Proton acceptor in catalysis.

This sequence belongs to the PanB family. As to quaternary structure, homodecamer; pentamer of dimers. Mg(2+) is required as a cofactor.

It is found in the cytoplasm. The enzyme catalyses 3-methyl-2-oxobutanoate + (6R)-5,10-methylene-5,6,7,8-tetrahydrofolate + H2O = 2-dehydropantoate + (6S)-5,6,7,8-tetrahydrofolate. It participates in cofactor biosynthesis; (R)-pantothenate biosynthesis; (R)-pantoate from 3-methyl-2-oxobutanoate: step 1/2. Its function is as follows. Catalyzes the reversible reaction in which hydroxymethyl group from 5,10-methylenetetrahydrofolate is transferred onto alpha-ketoisovalerate to form ketopantoate. The chain is 3-methyl-2-oxobutanoate hydroxymethyltransferase from Afipia carboxidovorans (strain ATCC 49405 / DSM 1227 / KCTC 32145 / OM5) (Oligotropha carboxidovorans).